A 784-amino-acid polypeptide reads, in one-letter code: Armadillo repeat-containing X-linked protein 2 (784 aa).

Topologically, residues 1 to 6 (MSRARD) are mitochondrial intermembrane. Mitochondrion outer membrane (MOM)-targeting sequence stretches follow at residues 1–6 (MSRARD) and 26–40 (KYTR…RLTK). The chain crosses the membrane as a helical; Signal-anchor span at residues 7 to 27 (AGCVAAGIVIGASAWYCVYKY). Topologically, residues 28–784 (TRGKDQKKKR…VKVIKLVNKF (757 aa)) are cytoplasmic. 3 disordered regions span residues 328–353 (TSGG…RTAS), 388–461 (HSGA…ELGM), and 488–522 (PESE…TIPM). The segment covering 396–418 (GTSGSSKTAATGKKAAPGAHTGA) has biased composition (low complexity). Acidic residues predominate over residues 488–508 (PESEEGESGWTDTESDSDSEP). 3 ARM repeats span residues 528–568 (PYEI…NNAN), 570–609 (SCNQ…NLSE), and 650–689 (ITND…NFAE).

It belongs to the eutherian X-chromosome-specific Armcx family. As to expression, widely expressed in the adult nervous tissue, especially in the forebrain, including the cerebral cortex, hippocampus and thalamus.

The protein localises to the mitochondrion. The protein resides in the mitochondrion outer membrane. May regulate the dynamics and distribution of mitochondria in neural cells. This chain is Armadillo repeat-containing X-linked protein 2 (Armcx2), found in Mus musculus (Mouse).